Reading from the N-terminus, the 377-residue chain is Ribosomal RNA large subunit methyltransferase G (377 aa).

Belongs to the methyltransferase superfamily. RlmG family.

Its subcellular location is the cytoplasm. The catalysed reaction is guanosine(1835) in 23S rRNA + S-adenosyl-L-methionine = N(2)-methylguanosine(1835) in 23S rRNA + S-adenosyl-L-homocysteine + H(+). Its function is as follows. Specifically methylates the guanine in position 1835 (m2G1835) of 23S rRNA. The polypeptide is Ribosomal RNA large subunit methyltransferase G (Shewanella oneidensis (strain ATCC 700550 / JCM 31522 / CIP 106686 / LMG 19005 / NCIMB 14063 / MR-1)).